We begin with the raw amino-acid sequence, 147 residues long: MNNPDDLIVITRFLRQQHVLTLCAGSGMDMWCANCFYVFDEAKMALYLMTEKHTRHGELMQINPQVVGTIATQPRTVALIKGIQYRGEITELKDDAELIARQHYCRRFPVAKVVSAPLWQLNLLEIKMTNNTLDFGKKLYWSRLESQ.

It belongs to the UPF0306 family.

This is UPF0306 protein YE0465 from Yersinia enterocolitica serotype O:8 / biotype 1B (strain NCTC 13174 / 8081).